The chain runs to 58 residues: Large ribosomal subunit protein uL30 (58 aa).

The protein belongs to the universal ribosomal protein uL30 family. As to quaternary structure, part of the 50S ribosomal subunit.

In Bacteroides thetaiotaomicron (strain ATCC 29148 / DSM 2079 / JCM 5827 / CCUG 10774 / NCTC 10582 / VPI-5482 / E50), this protein is Large ribosomal subunit protein uL30.